The primary structure comprises 280 residues: UDP-3-O-acyl-N-acetylglucosamine deacetylase (280 aa).

Residues H79, H237, and D241 each contribute to the Zn(2+) site. Residue H264 is the Proton donor of the active site.

Belongs to the LpxC family. The cofactor is Zn(2+).

The enzyme catalyses a UDP-3-O-[(3R)-3-hydroxyacyl]-N-acetyl-alpha-D-glucosamine + H2O = a UDP-3-O-[(3R)-3-hydroxyacyl]-alpha-D-glucosamine + acetate. Its pathway is glycolipid biosynthesis; lipid IV(A) biosynthesis; lipid IV(A) from (3R)-3-hydroxytetradecanoyl-[acyl-carrier-protein] and UDP-N-acetyl-alpha-D-glucosamine: step 2/6. Its function is as follows. Catalyzes the hydrolysis of UDP-3-O-myristoyl-N-acetylglucosamine to form UDP-3-O-myristoylglucosamine and acetate, the committed step in lipid A biosynthesis. The chain is UDP-3-O-acyl-N-acetylglucosamine deacetylase from Chlamydia caviae (strain ATCC VR-813 / DSM 19441 / 03DC25 / GPIC) (Chlamydophila caviae).